The following is a 165-amino-acid chain: Large ribosomal subunit protein uL10 (165 aa).

It belongs to the universal ribosomal protein uL10 family. As to quaternary structure, part of the ribosomal stalk of the 50S ribosomal subunit. The N-terminus interacts with L11 and the large rRNA to form the base of the stalk. The C-terminus forms an elongated spine to which L12 dimers bind in a sequential fashion forming a multimeric L10(L12)X complex.

In terms of biological role, forms part of the ribosomal stalk, playing a central role in the interaction of the ribosome with GTP-bound translation factors. The polypeptide is Large ribosomal subunit protein uL10 (Burkholderia mallei (strain NCTC 10229)).